The sequence spans 126 residues: Glycine cleavage system H protein (126 aa).

In terms of domain architecture, Lipoyl-binding spans 23 to 104 (TLTVGITDHA…PYESWLFKIK (82 aa)). An N6-lipoyllysine modification is found at lysine 64.

The protein belongs to the GcvH family. The glycine cleavage system is composed of four proteins: P, T, L and H. (R)-lipoate serves as cofactor.

Its function is as follows. The glycine cleavage system catalyzes the degradation of glycine. The H protein shuttles the methylamine group of glycine from the P protein to the T protein. The sequence is that of Glycine cleavage system H protein from Paraburkholderia phytofirmans (strain DSM 17436 / LMG 22146 / PsJN) (Burkholderia phytofirmans).